Consider the following 214-residue polypeptide: Cdc42 effector protein 2 (214 aa).

Ser2 is subject to N-acetylserine. Residues 30 to 44 (ISPPLGDFRHTIHIG) enclose the CRIB domain. Ser31, Ser101, Ser137, Ser141, and Ser145 each carry phosphoserine. A disordered region spans residues 119–177 (LTLPTAQAPPKPPRLHLESPQPSPQPSPQGAGNVDVWRIPEAGSPHNGMSPEPEAEEPF).

It belongs to the BORG/CEP family. In terms of assembly, interacts with CDC42 and RHOQ in a GTP-dependent manner, and with SEPT7.

The protein resides in the endomembrane system. The protein localises to the cytoplasm. It localises to the cytoskeleton. Probably involved in the organization of the actin cytoskeleton. May act downstream of CDC42 to induce actin filament assembly leading to cell shape changes. Induces pseudopodia formation in fibroblasts in a CDC42-dependent manner. This is Cdc42 effector protein 2 (Cdc42ep2) from Mus musculus (Mouse).